Here is a 255-residue protein sequence, read N- to C-terminus: Pyrroloquinoline-quinone synthase (255 aa).

This sequence belongs to the PqqC family.

It catalyses the reaction 6-(2-amino-2-carboxyethyl)-7,8-dioxo-1,2,3,4,7,8-hexahydroquinoline-2,4-dicarboxylate + 3 O2 = pyrroloquinoline quinone + 2 H2O2 + 2 H2O + H(+). The protein operates within cofactor biosynthesis; pyrroloquinoline quinone biosynthesis. Ring cyclization and eight-electron oxidation of 3a-(2-amino-2-carboxyethyl)-4,5-dioxo-4,5,6,7,8,9-hexahydroquinoline-7,9-dicarboxylic-acid to PQQ. The chain is Pyrroloquinoline-quinone synthase from Cereibacter sphaeroides (strain ATCC 17025 / ATH 2.4.3) (Rhodobacter sphaeroides).